The following is a 1929-amino-acid chain: Myoferlin (1929 aa).

The segment at 1-53 (MISYEPPPSAISNPTDPGGTTIIQGDGENDEEEDRDIVDAGFNPSVPGAPGQT) is disordered. Over residues 27-36 (GENDEEEDRD) the composition is skewed to acidic residues. C2 domains follow at residues 62-179 (VKGK…RKWV) and 218-354 (EDDD…EEYD). The Ca(2+) site is built by aspartate 267, aspartate 275, aspartate 323, aspartate 325, and aspartate 331. Basic residues predominate over residues 898–907 (RRLVRKRKKD). A disordered region spans residues 898–918 (RRLVRKRKKDPKVSTTSKAAL). C2 domains lie at 996–1124 (GANT…LLWY), 1159–1283 (RAPQ…TKHE), 1408–1527 (IPYP…SHCG), and 1645–1793 (GPPG…EKCS). Ca(2+)-binding residues include aspartate 1028, aspartate 1034, aspartate 1090, and aspartate 1092. Residues aspartate 1442, aspartate 1448, aspartate 1497, aspartate 1499, aspartate 1764, serine 1767, and aspartate 1770 each contribute to the Ca(2+) site. A compositionally biased stretch (basic and acidic residues) spans 1845–1858 (DAEERPAGKGRDEP). Residues 1845 to 1867 (DAEERPAGKGRDEPNMNPKLDPP) form a disordered region. The helical transmembrane segment at 1894-1914 (WVFIGLIILLLVLLFLGVFFY) threads the bilayer.

Belongs to the ferlin family. It depends on Ca(2+) as a cofactor.

It localises to the cell membrane. The protein resides in the nucleus membrane. The protein localises to the cytoplasmic vesicle membrane. Its function is as follows. May play a role in membrane regeneration and repair. The polypeptide is Myoferlin (myof) (Xenopus tropicalis (Western clawed frog)).